A 531-amino-acid polypeptide reads, in one-letter code: Putative UDP-glucuronosyltransferase ugt-46 (531 aa).

The first 17 residues, 1-17 (MRLIFVLLATFVNAAFS), serve as a signal peptide directing secretion. An N-linked (GlcNAc...) asparagine glycan is attached at N304. Residues 493-513 (VIIPVFWLSISLVIPTIFGWY) form a helical membrane-spanning segment.

The protein belongs to the UDP-glycosyltransferase family.

The protein localises to the membrane. It carries out the reaction glucuronate acceptor + UDP-alpha-D-glucuronate = acceptor beta-D-glucuronoside + UDP + H(+). This is Putative UDP-glucuronosyltransferase ugt-46 (ugt-46) from Caenorhabditis elegans.